The following is a 505-amino-acid chain: Outer capsid protein VP5 (505 aa).

The involved in membrane permeabilization stretch occupies residues 1–42 (MGKFTSFLKRAGSATKKALTSDAAKRMYKMAGKTLQKVVESE).

This sequence belongs to the orbivirus VP5 family.

It localises to the virion. Its function is as follows. VP5 protein is one of the two proteins (with VP2) which constitute the virus particle outer capsid. Acts as a membrane permeabilization protein that mediates release of viral particles from endosomal compartments into the cytoplasm. Permeabilization activity is probably negatively regulated by VP2 and is triggered by endosomal degradation of VP2 and exposure to low pH. In African horse sickness virus 9 (AHSV-9), this protein is Outer capsid protein VP5 (Segment-6).